Here is a 1323-residue protein sequence, read N- to C-terminus: Sister chromatid cohesion protein PDS5 homolog A-A (1323 aa).

An HEAT repeat occupies Phe385–Tyr421. Residues Leu1139–Arg1323 are disordered. Residues Ser1153–Ser1165 show a composition bias toward low complexity. Polar residues-rich tracts occupy residues Asp1166–Glu1176 and Leu1210–Thr1220. The span at Asn1235–Asp1246 shows a compositional bias: basic and acidic residues.

As to quaternary structure, interacts with the cohesin complex. Binds chromatin in a cohesin-dependent manner.

The protein localises to the nucleus. Its function is as follows. May regulate sister chromatid cohesion during mitosis and couple it to DNA replication. This chain is Sister chromatid cohesion protein PDS5 homolog A-A (pds5a-a), found in Xenopus laevis (African clawed frog).